We begin with the raw amino-acid sequence, 374 residues long: Cysteine-type anaerobic sulfatase-maturating enzyme (374 aa).

A Radical SAM core domain is found at 1-227 (MKSLSMLIKP…LNKLFDLWFK (227 aa)). [4Fe-4S] cluster-binding residues include cysteine 15 and cysteine 19. An S-adenosyl-L-methionine-binding site is contributed by tyrosine 21. Residue cysteine 22 coordinates [4Fe-4S] cluster. S-adenosyl-L-methionine contacts are provided by glycine 66, serine 122, arginine 134, and leucine 195. [4Fe-4S] cluster contacts are provided by cysteine 255, cysteine 261, and cysteine 276. Aspartate 277 serves as the catalytic Proton acceptor. [4Fe-4S] cluster-binding residues include cysteine 317, cysteine 320, cysteine 326, cysteine 330, and cysteine 348.

It belongs to the radical SAM superfamily. Anaerobic sulfatase-maturating enzyme family. [4Fe-4S] cluster serves as cofactor.

The enzyme catalyses L-cysteinyl-[sulfatase] + S-adenosyl-L-methionine + H2O = 3-oxo-L-alanyl-[sulfatase] + hydrogen sulfide + 5'-deoxyadenosine + L-methionine + 2 H(+). Its pathway is protein modification; sulfatase oxidation. Its function is as follows. Involved in 'Cys-type' sulfatase maturation under anaerobic conditions. Catalyzes the post-translational modification of cysteine into 3-oxoalanine (also known as C(alpha)-formylglycine (FGly)), by a free radical chemical mechanism initiated via the reductive cleavage of S-adenosyl-L-methionine (SAM). This chain is Cysteine-type anaerobic sulfatase-maturating enzyme, found in Clostridium novyi (strain NT).